A 310-amino-acid chain; its full sequence is Transcription initiation factor TFIID subunit 8 (310 aa).

The interval 1 to 30 (MADAAATAGAGGSGTRSGSKQSTNPADNYH) is disordered. Position 2 is an N-acetylalanine (Ala2). Residues 35–102 (RTLQVVVSSL…IVVTLVEMGF (68 aa)) form the Histone-fold; involved in forming hexamer structure in TFIID complex domain. A Phosphothreonine modification is found at Thr130. Residues 262-310 (DSGAEKENTSVLQQNPSLSGSRNGEENIIDNPYLRPVKKPKIRRKKSLS) are disordered. The span at 270–283 (TSVLQQNPSLSGSR) shows a compositional bias: polar residues. Ser271 bears the Phosphoserine mark. Positions 294–307 (YLRPVKKPKIRRKK) match the Nuclear localization signal motif. Basic residues predominate over residues 297-310 (PVKKPKIRRKKSLS).

Belongs to the TAF8 family. In terms of assembly, component of the TFIID basal transcription factor complex, composed of TATA-box-binding protein TBP, and a number of TBP-associated factors (TAFs), including TAF1, TAF2, TAF3, TAF4, TAF5, TAF6, TAF7, TAF8, TAF9, TAF10, TAF11, TAF12 and TAF13. Interacts with TBP, TAF1, TAF6, TAF10, TAF11 and TAF13. Component also of a small TAF complex (SMAT) containing TAF8, TAF10 and SUPT7L. Forms a heterodimer with TAF10. Interaction with TAF10 is mediated mainly via its histone fold domain while interaction with SUPT7L is via its C-terminal region.

The protein localises to the nucleus. Its subcellular location is the cytoplasm. Functionally, the TFIID basal transcription factor complex plays a major role in the initiation of RNA polymerase II (Pol II)-dependent transcription. TFIID recognizes and binds promoters with or without a TATA box via its subunit TBP, a TATA-box-binding protein, and promotes assembly of the pre-initiation complex (PIC). The TFIID complex consists of TBP and TBP-associated factors (TAFs), including TAF1, TAF2, TAF3, TAF4, TAF5, TAF6, TAF7, TAF8, TAF9, TAF10, TAF11, TAF12 and TAF13. The TFIID complex structure can be divided into 3 modules TFIID-A, TFIID-B, and TFIID-C. TAF8 is involved in forming the TFIID-B module, together with TAF5. Mediates both basal and activator-dependent transcription. Plays a role in the differentiation of preadipocyte fibroblasts to adipocytes, however, does not seem to play a role in differentiation of myoblasts. Required for the integration of TAF10 in the TAF complex. May be important for survival of cells of the inner cell mass which constitute the pluripotent cell population of the early embryo. This chain is Transcription initiation factor TFIID subunit 8 (TAF8), found in Homo sapiens (Human).